Here is a 195-residue protein sequence, read N- to C-terminus: HTH-type transcriptional regulator BetI (195 aa).

Positions 8–68 constitute an HTH tetR-type domain; it reads SIRRRQLIDA…ATMRDITSQL (61 aa). The H-T-H motif DNA-binding region spans 31 to 50; the sequence is TIAQIARRAGVSTGIISHYF.

It functions in the pathway amine and polyamine biosynthesis; betaine biosynthesis via choline pathway [regulation]. Repressor involved in the biosynthesis of the osmoprotectant glycine betaine. It represses transcription of the choline transporter BetT and the genes of BetAB involved in the synthesis of glycine betaine. The chain is HTH-type transcriptional regulator BetI from Escherichia coli O127:H6 (strain E2348/69 / EPEC).